The chain runs to 412 residues: Putative competence-damage inducible protein (412 aa).

The protein belongs to the CinA family.

The chain is Putative competence-damage inducible protein from Bacillus cereus (strain AH820).